The following is a 516-amino-acid chain: uncharacterized protein (516 aa).

Serine 21 bears the Phosphoserine mark. Residues 46 to 74 (DLQSSMEDSNKANGNGEETTDGAEGVLQT) form a disordered region. Polar residues predominate over residues 47 to 62 (LQSSMEDSNKANGNGE). WD repeat units lie at residues 182–227 (TFPL…AVYP), 252–292 (YHTD…CVKS), 295–335 (YHSD…APSS), 337–377 (QVTS…KSVW), 381–421 (AHDG…PKMV), and 426–468 (LDVG…GVRK). Residues 482–493 (ERIVQLEDRGAG) are compositionally biased toward basic and acidic residues. Residues 482–516 (ERIVQLEDRGAGEDSSDDDDYEDIEDDDDQDAEMS) form a disordered region. Residues 495 to 516 (DSSDDDDYEDIEDDDDQDAEMS) are compositionally biased toward acidic residues. Phosphoserine is present on residues serine 496 and serine 497.

It localises to the cytoplasm. It is found in the nucleus. The protein localises to the nucleolus. This is an uncharacterized protein from Schizosaccharomyces pombe (strain 972 / ATCC 24843) (Fission yeast).